The following is a 429-amino-acid chain: Enolase (429 aa).

Q168 serves as a coordination point for (2R)-2-phosphoglycerate. E210 functions as the Proton donor in the catalytic mechanism. Mg(2+)-binding residues include D247, E288, and D315. (2R)-2-phosphoglycerate contacts are provided by K340, R369, S370, and K391. K340 acts as the Proton acceptor in catalysis.

Belongs to the enolase family. Requires Mg(2+) as cofactor.

The protein resides in the cytoplasm. The protein localises to the secreted. Its subcellular location is the cell surface. The enzyme catalyses (2R)-2-phosphoglycerate = phosphoenolpyruvate + H2O. It participates in carbohydrate degradation; glycolysis; pyruvate from D-glyceraldehyde 3-phosphate: step 4/5. Functionally, catalyzes the reversible conversion of 2-phosphoglycerate (2-PG) into phosphoenolpyruvate (PEP). It is essential for the degradation of carbohydrates via glycolysis. The protein is Enolase of Trichormus variabilis (strain ATCC 29413 / PCC 7937) (Anabaena variabilis).